Consider the following 133-residue polypeptide: CDGSH iron-sulfur domain-containing protein 2 homolog (133 aa).

Residues 1 to 35 lie on the Lumenal side of the membrane; that stretch reads MEPISHLVKSSLPNYLSSLPIPDSIGGWFKLSFKD. The chain crosses the membrane as a helical span at residues 36–58; that stretch reads WLALIPPTVVVAGLGYTAYLAYC. Topologically, residues 59–133 are cytoplasmic; that stretch reads PAAQGSCSAK…DNVGPIVIKK (75 aa). 4 residues coordinate [2Fe-2S] cluster: cysteine 100, cysteine 102, cysteine 111, and histidine 115.

It belongs to the CISD protein family. CISD2 subfamily. The cofactor is [2Fe-2S] cluster.

It is found in the endoplasmic reticulum membrane. The sequence is that of CDGSH iron-sulfur domain-containing protein 2 homolog from Drosophila erecta (Fruit fly).